Consider the following 371-residue polypeptide: Putative glutamate--cysteine ligase 2 (371 aa).

The protein belongs to the glutamate--cysteine ligase type 2 family. YbdK subfamily.

The catalysed reaction is L-cysteine + L-glutamate + ATP = gamma-L-glutamyl-L-cysteine + ADP + phosphate + H(+). Its function is as follows. ATP-dependent carboxylate-amine ligase which exhibits weak glutamate--cysteine ligase activity. This chain is Putative glutamate--cysteine ligase 2, found in Burkholderia mallei (strain NCTC 10247).